Here is a 199-residue protein sequence, read N- to C-terminus: MDSENCSITENSSSHLERGQKDHGTSIHFEKHHEGSIQVSIPWAVLIVVLITSLIIALIALNVGKYNCPGLYEKLESSDHHVATCKNEWISYKRTCYFFSTTTKSWALAQRSCSEDAATLAVIDSEKDMTFLKRYSGELEHWIGLKNEANQTWKWANGKEFNSWFNLTGSGRCVSVNHKNVTAVDCEANFHWVCSKPSR.

Residues 1–14 (MDSENCSITENSSS) are compositionally biased toward polar residues. The tract at residues 1–20 (MDSENCSITENSSSHLERGQ) is disordered. Over 1-40 (MDSENCSITENSSSHLERGQKDHGTSIHFEKHHEGSIQVS) the chain is Cytoplasmic. Residues 41 to 61 (IPWAVLIVVLITSLIIALIAL) traverse the membrane as a helical; Signal-anchor for type II membrane protein segment. Over 62 to 199 (NVGKYNCPGL…FHWVCSKPSR (138 aa)) the chain is Extracellular. 3 disulfides stabilise this stretch: C85-C96, C113-C194, and C173-C186. The region spanning 92 to 195 (YKRTCYFFST…CEANFHWVCS (104 aa)) is the C-type lectin domain. N150, N166, and N180 each carry an N-linked (GlcNAc...) asparagine glycan.

Homodimer; disulfide-linked. Interacts with S100A8 and S100A9. Interacts with galactin-1/LGALS1. Interacts with S1PR1; this interaction mediates S1PR1 degradation. Interacts with JAK3 and STAT5. Post-translationally, constitutive Ser/Thr phosphorylation in both mature thymocytes and activated T-lymphocytes. As to expression, expressed on the surface of activated T-cells, B-cells, natural killer cells, neutrophils and platelets. Present also in eosinophils.

It localises to the cell membrane. In terms of biological role, transmembrane protein expressed mainly on T-cells resident in mucosa that plays an essential role in immune cell homeostasis. Rapidly expressed on the surface of platelets, T-lymphocytes and NK cells upon activation by various stimuli, such as antigen recognition or cytokine signaling, stimulates different signaling pathways in different cell types. Negatively regulates Th17 cell differentiation through its carbohydrate dependent interaction with galectin-1/LGALS1 present on immature dendritic cells. Association of CD69 cytoplasmic tail with the JAK3/STAT5 signaling pathway regulates the transcription of RORgamma/RORC and, consequently, differentiation toward the Th17 lineage. Also acts via the S100A8/S100A9 complex present on peripheral blood mononuclear cells to promote the conversion of naive CD4 T-cells into regulatory T-cells. Acts as an oxidized low-density lipoprotein (oxLDL) receptor in CD4 T-lymphocytes and negatively regulates the inflammatory response by inducing the expression of PDCD1 through the activation of NFAT. Participates in adipose tissue-derived mesenchymal stem cells (ASCs)-mediated protection against P.aeruginosa infection. Mechanistically, specifically recognizes P.aeruginosa to promote ERK1 activation, followed by granulocyte-macrophage colony-stimulating factor (GM-CSF) and other inflammatory cytokines secretion. In eosinophils, induces IL-10 production through the ERK1/2 pathway. Negatively regulates the chemotactic responses of effector lymphocytes and dendritic cells (DCs) to sphingosine 1 phosphate/S1P by acting as a S1PR1 receptor agonist and facilitating the internalization and degradation of the receptor. This Mus musculus (Mouse) protein is Early activation antigen CD69 (Cd69).